Consider the following 365-residue polypeptide: NADH-quinone oxidoreductase subunit H (365 aa).

A run of 8 helical transmembrane segments spans residues 27 to 47 (LLLILAIIIPLLLAVAYLTFA), 99 to 119 (FLFLLAPILAITPALAAWAVV), 133 to 153 (ALLYILAMTSLGVYGVIIAGW), 168 to 188 (AAQVISYELAMGFALVCVLMM), 206 to 226 (FLNWYMIPLFPMFLVYFISGV), 268 to 288 (ILVATLASIMFLGGWLPPVDI), 294 to 314 (IPGVVWLLLKIAIMLFFFLWF), and 329 to 349 (LGWKVFIPITLIWIVLLGAVM).

This sequence belongs to the complex I subunit 1 family. In terms of assembly, NDH-1 is composed of 14 different subunits. Subunits NuoA, H, J, K, L, M, N constitute the membrane sector of the complex.

The protein localises to the cell inner membrane. It catalyses the reaction a quinone + NADH + 5 H(+)(in) = a quinol + NAD(+) + 4 H(+)(out). Its function is as follows. NDH-1 shuttles electrons from NADH, via FMN and iron-sulfur (Fe-S) centers, to quinones in the respiratory chain. The immediate electron acceptor for the enzyme in this species is believed to be ubiquinone. Couples the redox reaction to proton translocation (for every two electrons transferred, four hydrogen ions are translocated across the cytoplasmic membrane), and thus conserves the redox energy in a proton gradient. This subunit may bind ubiquinone. This chain is NADH-quinone oxidoreductase subunit H, found in Nitrosomonas eutropha (strain DSM 101675 / C91 / Nm57).